The sequence spans 460 residues: Bifunctional protein GlmU (460 aa).

The segment at 1 to 235 is pyrophosphorylase; it reads MALSAAIVLA…PLTVEGVNDR (235 aa). UDP-N-acetyl-alpha-D-glucosamine contacts are provided by residues 9–12, lysine 23, glutamine 76, and 81–82; these read LAAG and GT. Residue aspartate 109 participates in Mg(2+) binding. UDP-N-acetyl-alpha-D-glucosamine contacts are provided by glycine 146, glutamate 161, asparagine 176, and asparagine 233. A Mg(2+)-binding site is contributed by asparagine 233. The interval 236–256 is linker; sequence VQLAALSKTYNRRVCERWMRD. The segment at 257–460 is N-acetyltransferase; it reads GVTILDPETT…VEGWKPAWER (204 aa). Residues arginine 338 and lysine 356 each coordinate UDP-N-acetyl-alpha-D-glucosamine. Histidine 368 (proton acceptor) is an active-site residue. UDP-N-acetyl-alpha-D-glucosamine contacts are provided by tyrosine 371 and asparagine 382. Acetyl-CoA-binding positions include 391–392 and alanine 428; that span reads NY.

This sequence in the N-terminal section; belongs to the N-acetylglucosamine-1-phosphate uridyltransferase family. In the C-terminal section; belongs to the transferase hexapeptide repeat family. Homotrimer. It depends on Mg(2+) as a cofactor.

The protein resides in the cytoplasm. The catalysed reaction is alpha-D-glucosamine 1-phosphate + acetyl-CoA = N-acetyl-alpha-D-glucosamine 1-phosphate + CoA + H(+). It carries out the reaction N-acetyl-alpha-D-glucosamine 1-phosphate + UTP + H(+) = UDP-N-acetyl-alpha-D-glucosamine + diphosphate. Its pathway is nucleotide-sugar biosynthesis; UDP-N-acetyl-alpha-D-glucosamine biosynthesis; N-acetyl-alpha-D-glucosamine 1-phosphate from alpha-D-glucosamine 6-phosphate (route II): step 2/2. It functions in the pathway nucleotide-sugar biosynthesis; UDP-N-acetyl-alpha-D-glucosamine biosynthesis; UDP-N-acetyl-alpha-D-glucosamine from N-acetyl-alpha-D-glucosamine 1-phosphate: step 1/1. The protein operates within bacterial outer membrane biogenesis; LPS lipid A biosynthesis. In terms of biological role, catalyzes the last two sequential reactions in the de novo biosynthetic pathway for UDP-N-acetylglucosamine (UDP-GlcNAc). The C-terminal domain catalyzes the transfer of acetyl group from acetyl coenzyme A to glucosamine-1-phosphate (GlcN-1-P) to produce N-acetylglucosamine-1-phosphate (GlcNAc-1-P), which is converted into UDP-GlcNAc by the transfer of uridine 5-monophosphate (from uridine 5-triphosphate), a reaction catalyzed by the N-terminal domain. This Bifidobacterium longum (strain DJO10A) protein is Bifunctional protein GlmU.